Here is a 475-residue protein sequence, read N- to C-terminus: Flavin-dependent monooxygenase (475 aa).

This sequence belongs to the aromatic-ring hydroxylase family. The cofactor is FAD.

Its subcellular location is the cytoplasm. It catalyses the reaction a tetracycline + NADPH + O2 + H(+) = an 11a-hydroxytetracycline + NADP(+) + H2O. The catalysed reaction is tetracycline + NADPH + O2 + H(+) = 11a-hydroxytetracycline + NADP(+) + H2O. Its activity is regulated as follows. Inhibited by anhydrotetracycline. An FAD-requiring monooxygenase active on some tetracycline antibiotic derivatives, which leads to their inactivation. Hydroxylates carbon 11a of tetracycline and some analogs. Confers resistance to tetracycline and doxycycline via an oxidoreductase activity; probably monooxygenates the antibiotics. Does not act on tigecycline. This Mycobacteroides abscessus (strain ATCC 19977 / DSM 44196 / CCUG 20993 / CIP 104536 / JCM 13569 / NCTC 13031 / TMC 1543 / L948) (Mycobacterium abscessus) protein is Flavin-dependent monooxygenase.